Consider the following 328-residue polypeptide: UPF0421 protein SERP1427 (328 aa).

Helical transmembrane passes span 26–46, 61–81, 109–129, and 132–152; these read LFCM…IVTI, LPAT…FGDQ, AVLT…FNFF, and LLTA…ILPP.

It belongs to the UPF0421 family.

It is found in the cell membrane. The chain is UPF0421 protein SERP1427 from Staphylococcus epidermidis (strain ATCC 35984 / DSM 28319 / BCRC 17069 / CCUG 31568 / BM 3577 / RP62A).